A 94-amino-acid polypeptide reads, in one-letter code: ESAT-6-like protein EsxN (94 aa).

It belongs to the WXG100 family. ESAT-6 subfamily.

The protein localises to the secreted. The chain is ESAT-6-like protein EsxN from Mycobacterium bovis (strain ATCC BAA-935 / AF2122/97).